We begin with the raw amino-acid sequence, 70 residues long: MKKGIHPKYEEITATCSCGNVMKIRSTVGHDLNLDVCGKCHPFFTGKQRDVATGGRVDRFNKRFSIPGSK.

Zn(2+)-binding residues include Cys16, Cys18, Cys37, and Cys40.

It belongs to the bacterial ribosomal protein bL31 family. Type A subfamily. In terms of assembly, part of the 50S ribosomal subunit. Zn(2+) serves as cofactor.

Binds the 23S rRNA. The polypeptide is Large ribosomal subunit protein bL31 (Klebsiella pneumoniae (strain 342)).